A 576-amino-acid chain; its full sequence is MAWVTQAYSSGLSQNSIISLTGNDRTVADGTFNSMIMPRAVIANEREHFMKTRIDKIEHDLSRNAKQEMMDRQSLAEDYSALNLAVGQEIKLDIATQHQLNRLGSSMYKADHEREAELTDLINRIRENEVTVNGILENQKAITAAERADLLLEVVASTAKSVSAAGRAAADGSGVVPVFGPSVANGIKVGIDIADSVAEAAIAVKESGIITQLNDVYHAFQSVHVAPNDIIKPAAVVAGTSTELIGNLQAIYSRLRSHSDIGFKKATVGDVIPHSYMVKPVNSTEYASWQLYVIHPVQGSLGLVVQVMGDALTYNVFAQYGTTSASEFGKTVLTGGATNTALEGTKVKFQTKVTAQQALALTMALKDAASMLSQGELIGYFEQYINLALEPDNLSLQDNMHKYHHLLTSQNSPIDWNYHDEEMHKWLDSRKITNYDTMKQKDGVVIADIHIPKVFNDLRNTTLHCKLEGKQNIAGYTVYEYLIGPWAHYGDIDYSVVVDTLNEETKWYCEIIGIDGHLIIEKSVQHKPEKILELTVNDDGLTSFKGKNHDRLKLKVYVKDSLAVKVFRNWIGINGT.

The protein localises to the virion. The sequence is that of Outer capsid protein VP4 (Segment-4) from Banna virus (BAV).